A 504-amino-acid chain; its full sequence is 26S proteasome non-ATPase regulatory subunit 3 (504 aa).

The PCI domain occupies 254–434 (ARYFYYQGRI…GYLQSRENID (181 aa)). Residues 485–504 (KEEMERQAEESSDNEGDSDF) are disordered. Residues 494–504 (ESSDNEGDSDF) are compositionally biased toward acidic residues.

The protein belongs to the proteasome subunit S3 family. In terms of assembly, the 26S proteasome is composed of a core protease, known as the 20S proteasome, capped at one or both ends by the 19S regulatory complex (RC). The RC is composed of at least 18 different subunits in two subcomplexes, the base and the lid, which form the portions proximal and distal to the 20S proteolytic core, respectively.

In terms of biological role, acts as a regulatory subunit of the 26 proteasome which is involved in the ATP-dependent degradation of ubiquitinated proteins. This Dictyostelium discoideum (Social amoeba) protein is 26S proteasome non-ATPase regulatory subunit 3 (psmD3).